A 72-amino-acid chain; its full sequence is Aurein-2.5 (72 aa).

An N-terminal signal peptide occupies residues 1–22 (MAFLKKSLFLVLFLGLVSLSIC). Residues 23-49 (EKEKRQNEEDEDENEAANHEEGSEEKR) constitute a propeptide that is removed on maturation. Positions 27–47 (RQNEEDEDENEAANHEEGSEE) are disordered. Residues 38–47 (AANHEEGSEE) show a composition bias toward basic and acidic residues. The residue at position 65 (leucine 65) is a Leucine amide. Residues 69–72 (NDLE) constitute a propeptide that is removed on maturation.

The protein belongs to the frog skin active peptide (FSAP) family. Aurein subfamily. In terms of assembly, may be monomeric or may oligomerize as homodimers or homotrimers in Gram-positive and Gram-negative bacteria mimetic membranes. In terms of processing, C-terminal amidation enhances antibacterial activity. This increase may be due to stabilization of the alpha-helical structure at the membrane interface. In terms of tissue distribution, expressed by the skin dorsal glands.

Its subcellular location is the secreted. It localises to the target cell membrane. Its function is as follows. Amphipathic alpha-helical antimicrobial peptide with moderate to potent activity against Gram-positive bacteria, Gram-negative bacteria and fungi. Also shows a weak activity against biofilm of both Gram-positive and Gram-negative bacteria. Probably acts by disturbing membrane functions with its amphipathic structure. Kills fungi via membranolytic action. Enhanced sterol levels in lipid composition membranes reduce interaction of this peptide with membranes, having a protective effect against the lytic ability of the peptide. Shows anticancer activity. The protein is Aurein-2.5 of Ranoidea aurea (Green and golden bell frog).